We begin with the raw amino-acid sequence, 278 residues long: Bifunctional protein FolD (278 aa).

NADP(+) contacts are provided by residues 165–167 (GRS), Ser-190, and Thr-231.

It belongs to the tetrahydrofolate dehydrogenase/cyclohydrolase family. Homodimer.

It catalyses the reaction (6R)-5,10-methylene-5,6,7,8-tetrahydrofolate + NADP(+) = (6R)-5,10-methenyltetrahydrofolate + NADPH. It carries out the reaction (6R)-5,10-methenyltetrahydrofolate + H2O = (6R)-10-formyltetrahydrofolate + H(+). It functions in the pathway one-carbon metabolism; tetrahydrofolate interconversion. Its function is as follows. Catalyzes the oxidation of 5,10-methylenetetrahydrofolate to 5,10-methenyltetrahydrofolate and then the hydrolysis of 5,10-methenyltetrahydrofolate to 10-formyltetrahydrofolate. In Clostridium novyi (strain NT), this protein is Bifunctional protein FolD.